The following is a 291-amino-acid chain: Methionine aminopeptidase (291 aa).

Residue His-118 participates in substrate binding. Residues Asp-135, Asp-146, and His-209 each contribute to the a divalent metal cation site. A substrate-binding site is contributed by His-216. Positions 241 and 273 each coordinate a divalent metal cation.

Belongs to the peptidase M24A family. Methionine aminopeptidase type 1 subfamily. In terms of assembly, monomer. Requires Co(2+) as cofactor. It depends on Zn(2+) as a cofactor. The cofactor is Mn(2+). Fe(2+) serves as cofactor.

It catalyses the reaction Release of N-terminal amino acids, preferentially methionine, from peptides and arylamides.. Removes the N-terminal methionine from nascent proteins. The N-terminal methionine is often cleaved when the second residue in the primary sequence is small and uncharged (Met-Ala-, Cys, Gly, Pro, Ser, Thr, or Val). Requires deformylation of the N(alpha)-formylated initiator methionine before it can be hydrolyzed. The protein is Methionine aminopeptidase of Chlamydia pneumoniae (Chlamydophila pneumoniae).